The primary structure comprises 156 residues: Ribonuclease pancreatic (156 aa).

Positions 1–26 are cleaved as a signal peptide; the sequence is MGLEKSLVFFPLLVLLALGWVQPCLG. Substrate is bound by residues lysine 33 and arginine 36. The active-site Proton acceptor is the histidine 38. 4 disulfides stabilise this stretch: cysteine 54–cysteine 112, cysteine 68–cysteine 123, cysteine 86–cysteine 138, and cysteine 93–cysteine 100. Position 69–73 (69–73) interacts with substrate; sequence KPVNT. Asparagine 90 carries N-linked (GlcNAc...) asparagine glycosylation. Lysine 94 and arginine 113 together coordinate substrate. Histidine 147 serves as the catalytic Proton donor.

The protein belongs to the pancreatic ribonuclease family. As to quaternary structure, monomer. Interacts with and forms tight 1:1 complexes with RNH1. Dimerization of two such complexes may occur. Interaction with RNH1 inhibits this protein. In terms of tissue distribution, pancreas.

It is found in the secreted. It catalyses the reaction an [RNA] containing cytidine + H2O = an [RNA]-3'-cytidine-3'-phosphate + a 5'-hydroxy-ribonucleotide-3'-[RNA].. It carries out the reaction an [RNA] containing uridine + H2O = an [RNA]-3'-uridine-3'-phosphate + a 5'-hydroxy-ribonucleotide-3'-[RNA].. Functionally, endonuclease that catalyzes the cleavage of RNA on the 3' side of pyrimidine nucleotides. Acts on single-stranded and double-stranded RNA. This chain is Ribonuclease pancreatic (RNASE1), found in Glis glis (Fat dormouse).